We begin with the raw amino-acid sequence, 372 residues long: Glutamate 5-kinase (372 aa).

ATP is bound at residue K14. Substrate contacts are provided by S54, D141, and N153. ATP contacts are provided by residues 173 to 174 (TD) and 215 to 221 (SGGMLTK). Residues 280–358 (AGKVVVDEGA…HEIEHILGYI (79 aa)) enclose the PUA domain.

This sequence belongs to the glutamate 5-kinase family.

The protein resides in the cytoplasm. The enzyme catalyses L-glutamate + ATP = L-glutamyl 5-phosphate + ADP. It functions in the pathway amino-acid biosynthesis; L-proline biosynthesis; L-glutamate 5-semialdehyde from L-glutamate: step 1/2. Its function is as follows. Catalyzes the transfer of a phosphate group to glutamate to form L-glutamate 5-phosphate. The chain is Glutamate 5-kinase from Methylobacillus flagellatus (strain ATCC 51484 / DSM 6875 / VKM B-1610 / KT).